A 336-amino-acid chain; its full sequence is Phospho-N-acetylmuramoyl-pentapeptide-transferase (336 aa).

10 consecutive transmembrane segments (helical) span residues 3 to 23, 53 to 73, 78 to 98, 118 to 138, 143 to 163, 174 to 194, 200 to 220, 226 to 246, 251 to 271, and 316 to 336; these read LTLI…PYFI, GGTV…LFSI, SLAL…IGFL, LALQ…PSGI, VFGY…FWVV, GIDG…GVIA, FDVL…FCFN, VFMG…ISIA, WTLL…MLQV, and AFLW…LYVF.

The protein belongs to the glycosyltransferase 4 family. MraY subfamily. Mg(2+) is required as a cofactor.

The protein resides in the cell membrane. It catalyses the reaction UDP-N-acetyl-alpha-D-muramoyl-L-alanyl-gamma-D-glutamyl-L-lysyl-D-alanyl-D-alanine + di-trans,octa-cis-undecaprenyl phosphate = Mur2Ac(oyl-L-Ala-gamma-D-Glu-L-Lys-D-Ala-D-Ala)-di-trans,octa-cis-undecaprenyl diphosphate + UMP. It functions in the pathway cell wall biogenesis; peptidoglycan biosynthesis. Its function is as follows. Catalyzes the initial step of the lipid cycle reactions in the biosynthesis of the cell wall peptidoglycan: transfers peptidoglycan precursor phospho-MurNAc-pentapeptide from UDP-MurNAc-pentapeptide onto the lipid carrier undecaprenyl phosphate, yielding undecaprenyl-pyrophosphoryl-MurNAc-pentapeptide, known as lipid I. This is Phospho-N-acetylmuramoyl-pentapeptide-transferase from Streptococcus pyogenes serotype M1.